The following is a 143-amino-acid chain: Glutamyl-tRNA(Gln) amidotransferase subunit C, chloroplastic/mitochondrial (143 aa).

The protein belongs to the GatC family. Subunit of the heterotrimeric GatCAB amidotransferase (AdT) complex, composed of A, B and C subunits.

The protein localises to the mitochondrion. It is found in the plastid. Its subcellular location is the chloroplast. The catalysed reaction is L-glutamyl-tRNA(Gln) + L-glutamine + ATP + H2O = L-glutaminyl-tRNA(Gln) + L-glutamate + ADP + phosphate + H(+). In terms of biological role, allows the formation of correctly charged Gln-tRNA(Gln) through the transamidation of misacylated Glu-tRNA(Gln) in chloroplasts and mitochondria. The reaction takes place in the presence of glutamine and ATP through an activated gamma-phospho-Glu-tRNA(Gln). This chain is Glutamyl-tRNA(Gln) amidotransferase subunit C, chloroplastic/mitochondrial, found in Ricinus communis (Castor bean).